A 506-amino-acid chain; its full sequence is 2-isopropylmalate synthase (506 aa).

Residues 4–266 (ILFMDTTLRD…EPSMTLKEIK (263 aa)) enclose the Pyruvate carboxyltransferase domain. Residues Asp-13, His-201, His-203, and Asn-237 each contribute to the Mn(2+) site. The segment at 390-506 (NITQLQVHFV…KLKSFIQLVK (117 aa)) is regulatory domain.

This sequence belongs to the alpha-IPM synthase/homocitrate synthase family. LeuA type 1 subfamily. In terms of assembly, homodimer. Requires Mn(2+) as cofactor.

It localises to the cytoplasm. The catalysed reaction is 3-methyl-2-oxobutanoate + acetyl-CoA + H2O = (2S)-2-isopropylmalate + CoA + H(+). It participates in amino-acid biosynthesis; L-leucine biosynthesis; L-leucine from 3-methyl-2-oxobutanoate: step 1/4. Catalyzes the condensation of the acetyl group of acetyl-CoA with 3-methyl-2-oxobutanoate (2-ketoisovalerate) to form 3-carboxy-3-hydroxy-4-methylpentanoate (2-isopropylmalate). The protein is 2-isopropylmalate synthase of Bacillus cereus (strain AH820).